Reading from the N-terminus, the 149-residue chain is Large ribosomal subunit protein bL9 (149 aa).

Belongs to the bacterial ribosomal protein bL9 family.

Binds to the 23S rRNA. The polypeptide is Large ribosomal subunit protein bL9 (Leptospira borgpetersenii serovar Hardjo-bovis (strain JB197)).